The sequence spans 98 residues: Large ribosomal subunit protein bL28 (98 aa).

The protein belongs to the bacterial ribosomal protein bL28 family.

The sequence is that of Large ribosomal subunit protein bL28 from Rhizobium etli (strain ATCC 51251 / DSM 11541 / JCM 21823 / NBRC 15573 / CFN 42).